The following is a 549-amino-acid chain: Nectin-3 (549 aa).

Positions 1-57 are cleaved as a signal peptide; the sequence is MARTLRPSPLCPGGGKAQLSSASLLGAGLLLQPPTPPPLLLLLFPLLLFSRLCGALA. At 58-404 the chain is on the extracellular side; it reads GPIIVEPHVT…ATIKDDTIAT (347 aa). The 107-residue stretch at 59 to 165 folds into the Ig-like V-type domain; the sequence is PIIVEPHVTA…GNAQSSTTVT (107 aa). N-linked (GlcNAc...) asparagine glycans are attached at residues asparagine 73, asparagine 83, asparagine 125, asparagine 186, asparagine 222, and asparagine 331. Cysteine 78 and cysteine 148 are oxidised to a cystine. Ig-like C2-type domains lie at 170 to 258 and 269 to 354; these read PTVS…KDIR and PEVS…KVIY. 2 disulfides stabilise this stretch: cysteine 193-cysteine 246 and cysteine 291-cysteine 338. The chain crosses the membrane as a helical span at residues 405–425; sequence IIASVVGGALFIVLVSVLAGI. Over 426–549 the chain is Cytoplasmic; that stretch reads FCYRRRRTFR…SVISRREWYV (124 aa).

This sequence belongs to the nectin family. Cis- and trans-homodimer. Can form trans-heterodimers with NECTIN1, NECTIN2, PVR, IGSF4B/Necl-1 and with IGSF4. Interaction between NECTIN1 and NECTIN3 on the pre- and postsynaptic sites, respectively, initiates the formation of puncta adherentia junctions between axons and dendrites. Interacts (via Cytoplasmic domain) with AFDN, providing a connection with the actin cytoskeleton. Binds with low affinity to TIGIT. As to quaternary structure, (Microbial infection) Interacts with C.difficile toxin TcdB, suggesting that it may contribute to TcdB toxin entry into cells. It was however shown that NECTIN3/PVRL3 does not act as a major receptor for TcdB. Predominantly expressed in testis and placenta as well as in many cell lines, including epithelial cell lines.

Its subcellular location is the cell membrane. The protein localises to the postsynaptic cell membrane. It localises to the cell junction. The protein resides in the adherens junction. Cell adhesion molecule that promotes cell-cell adhesion through heterophilic trans-interactions with nectins-like or other nectins, such as trans-interaction with NECTIN2 at Sertoli-spermatid junctions. Trans-interaction with PVR induces activation of CDC42 and RAC small G proteins through common signaling molecules such as SRC and RAP1. Induces endocytosis-mediated down-regulation of PVR from the cell surface, resulting in reduction of cell movement and proliferation. Involved in axon guidance by promoting contacts between the commissural axons and the floor plate cells. Also involved in the formation of cell-cell junctions, including adherens junctions and synapses. Promotes formation of checkerboard-like cellular pattern of hair cells and supporting cells in the auditory epithelium via heterophilic interaction with NECTIN1: NECTIN1 is present in the membrane of hair cells and associates with NECTIN3 on supporting cells, thereby mediating heterotypic adhesion between these two cell types. Plays a role in the morphology of the ciliary body. This is Nectin-3 from Homo sapiens (Human).